An 800-amino-acid chain; its full sequence is Blood-group-substance endo-1,4-beta-galactosidase (800 aa).

The first 35 residues, 1–35 (MGGVTMKNNLKKYIKYILSVILVFFVGVNGMEVYA), serve as a signal peptide directing secretion.

It belongs to the glycosyl hydrolase 98 family.

The protein resides in the secreted. It catalyses the reaction Endohydrolysis of (1-&gt;4)-beta-D-galactosidic linkages in blood group A and B substances.. Functionally, endo-beta-galactosidase capable of releasing both the blood group A trisaccharide (A-Tri; GalNAcalpha1--&gt;3(Fucalpha1--&gt;2)Gal) and B trisaccharide (B-Tri; Galalpha1--&gt;3(Fucalpha1--&gt;2)Gal) glycotopes from blood group A- and B-containing glycoconjugates, respectively. This is Blood-group-substance endo-1,4-beta-galactosidase (eabC) from Clostridium perfringens.